The sequence spans 132 residues: UPF0719 inner membrane protein YjfL (132 aa).

Residues 1-6 (MHILDS) lie on the Periplasmic side of the membrane. A helical membrane pass occupies residues 7–27 (LLAFSAYFFIGVAMVIIFLFI). Residues 28–46 (YSKITPHNEWQLIKNNNTA) lie on the Cytoplasmic side of the membrane. Residues 47–67 (ASLAFSGTLLGYVIPLSSAAI) form a helical membrane-spanning segment. The Periplasmic portion of the chain corresponds to 68–71 (NAVS). A helical membrane pass occupies residues 72 to 92 (IPDYFAWGGIALVIQLLVFAG). The Cytoplasmic segment spans residues 93–109 (VRLYMPALSEKIINHNT). A helical transmembrane segment spans residues 110-130 (AAGMFMGTAALAGGIFNAACM). At 131–132 (TW) the chain is on the periplasmic side.

The protein belongs to the UPF0719 family.

It localises to the cell inner membrane. This is UPF0719 inner membrane protein YjfL (yjfL) from Escherichia coli O157:H7.